A 170-amino-acid polypeptide reads, in one-letter code: Acetyl-CoA decarbonylase/synthase complex subunit epsilon 1 (170 aa).

This sequence belongs to the CdhB family. As to quaternary structure, heterotetramer of two alpha and two epsilon subunits. The ACDS complex is made up of alpha, epsilon, beta, gamma and delta subunits with a probable stoichiometry of (alpha(2)epsilon(2))(4)-beta(8)-(gamma(1)delta(1))(8).

It participates in one-carbon metabolism; methanogenesis from acetate. Part of a complex that catalyzes the reversible cleavage of acetyl-CoA, allowing growth on acetate as sole source of carbon and energy. The alpha-epsilon subcomponent functions as a carbon monoxide dehydrogenase. The precise role of the epsilon subunit is unclear; it may have a stabilizing role within the alpha(2)epsilon(2) component and/or be involved in electron transfer to FAD during a potential FAD-mediated CO oxidation. The sequence is that of Acetyl-CoA decarbonylase/synthase complex subunit epsilon 1 from Methanosarcina barkeri (strain Fusaro / DSM 804).